The following is a 331-amino-acid chain: Ketol-acid reductoisomerase (NADP(+)) (331 aa).

Residues 2–181 (TKVYYEDAVK…GATRAGVIET (180 aa)) enclose the KARI N-terminal Rossmann domain. NADP(+) is bound by residues 25-28 (YGSQ), Arg48, Ser52, and 82-85 (DETQ). His107 is a catalytic residue. Gly133 is an NADP(+) binding site. The KARI C-terminal knotted domain occupies 182–327 (TFKEETETDL…AELREMMPFV (146 aa)). The Mg(2+) site is built by Asp190, Glu194, Glu226, and Glu230. Ser251 is a substrate binding site.

This sequence belongs to the ketol-acid reductoisomerase family. Mg(2+) is required as a cofactor.

The enzyme catalyses (2R)-2,3-dihydroxy-3-methylbutanoate + NADP(+) = (2S)-2-acetolactate + NADPH + H(+). It catalyses the reaction (2R,3R)-2,3-dihydroxy-3-methylpentanoate + NADP(+) = (S)-2-ethyl-2-hydroxy-3-oxobutanoate + NADPH + H(+). It functions in the pathway amino-acid biosynthesis; L-isoleucine biosynthesis; L-isoleucine from 2-oxobutanoate: step 2/4. Its pathway is amino-acid biosynthesis; L-valine biosynthesis; L-valine from pyruvate: step 2/4. Its function is as follows. Involved in the biosynthesis of branched-chain amino acids (BCAA). Catalyzes an alkyl-migration followed by a ketol-acid reduction of (S)-2-acetolactate (S2AL) to yield (R)-2,3-dihydroxy-isovalerate. In the isomerase reaction, S2AL is rearranged via a Mg-dependent methyl migration to produce 3-hydroxy-3-methyl-2-ketobutyrate (HMKB). In the reductase reaction, this 2-ketoacid undergoes a metal-dependent reduction by NADPH to yield (R)-2,3-dihydroxy-isovalerate. The protein is Ketol-acid reductoisomerase (NADP(+)) of Listeria innocua serovar 6a (strain ATCC BAA-680 / CLIP 11262).